The sequence spans 238 residues: MTAPMSIEPETGSSPGLTELISKWGRLSDSFLERRLTNISSARQEITAIKTENEARAKALRQSLEEDRAFWTNKITALGYKVAKRRMAMVTTEPGESTAPHLEVVHSDKGLLGLFEISAGDQLLCPSAITPFIRDRGGPGTCPLCLRTFDQKLEGHIYTELISSGHGVSRGSDGAWRAHFTGDTPPVLFPRKTLGKERAATLSAAIKQFKCLQVDHCTLEGIIESLAIKAHKILDLCE.

This is an uncharacterized protein from Ictaluridae (bullhead catfishes).